A 377-amino-acid chain; its full sequence is Cytochrome c peroxidase, mitochondrial (377 aa).

A mitochondrion-targeting transit peptide spans 1–32 (MSFRAPNLIRSTVGRRAGQTLNLRSQVIRRRF). Residue H138 is the Proton acceptor of the active site. H261 contributes to the heme b binding site. The active-site Tryptophan radical intermediate is the W277.

It belongs to the peroxidase family. Cytochrome c peroxidase subfamily. Forms a one-to-one complex with cytochrome c. Interacts with MID1 (via C-terminus); the interaction may contribute to cellular detoxification of radicals. Requires heme b as cofactor.

Its subcellular location is the mitochondrion matrix. The protein localises to the mitochondrion intermembrane space. It catalyses the reaction 2 Fe(II)-[cytochrome c] + H2O2 + 2 H(+) = 2 Fe(III)-[cytochrome c] + 2 H2O. In terms of biological role, destroys radicals which are normally produced within the cells and which are toxic to biological systems. The sequence is that of Cytochrome c peroxidase, mitochondrial (CCP1) from Cryptococcus neoformans var. grubii serotype A (strain H99 / ATCC 208821 / CBS 10515 / FGSC 9487) (Filobasidiella neoformans var. grubii).